Consider the following 185-residue polypeptide: Elongation factor P (185 aa).

Belongs to the elongation factor P family.

Its subcellular location is the cytoplasm. It functions in the pathway protein biosynthesis; polypeptide chain elongation. Functionally, involved in peptide bond synthesis. Stimulates efficient translation and peptide-bond synthesis on native or reconstituted 70S ribosomes in vitro. Probably functions indirectly by altering the affinity of the ribosome for aminoacyl-tRNA, thus increasing their reactivity as acceptors for peptidyl transferase. This Mesomycoplasma hyopneumoniae (strain 232) (Mycoplasma hyopneumoniae) protein is Elongation factor P.